The chain runs to 279 residues: Phosphatidylglycerol--prolipoprotein diacylglyceryl transferase (279 aa).

3 helical membrane passes run leucine 18–alanine 38, isoleucine 55–glutamine 75, and isoleucine 89–isoleucine 109. A 1,2-diacyl-sn-glycero-3-phospho-(1'-sn-glycerol) is bound at residue arginine 137. 2 helical membrane passes run leucine 203–glycine 223 and isoleucine 235–tyrosine 255.

Belongs to the Lgt family.

It localises to the cell membrane. The catalysed reaction is L-cysteinyl-[prolipoprotein] + a 1,2-diacyl-sn-glycero-3-phospho-(1'-sn-glycerol) = an S-1,2-diacyl-sn-glyceryl-L-cysteinyl-[prolipoprotein] + sn-glycerol 1-phosphate + H(+). The protein operates within protein modification; lipoprotein biosynthesis (diacylglyceryl transfer). Catalyzes the transfer of the diacylglyceryl group from phosphatidylglycerol to the sulfhydryl group of the N-terminal cysteine of a prolipoprotein, the first step in the formation of mature lipoproteins. In Staphylococcus aureus (strain Mu3 / ATCC 700698), this protein is Phosphatidylglycerol--prolipoprotein diacylglyceryl transferase.